The primary structure comprises 221 residues: Crossover junction endodeoxyribonuclease RuvC (221 aa).

Catalysis depends on residues Asp-12, Glu-73, and Asp-146. Positions 12, 73, and 146 each coordinate Mg(2+). The disordered stretch occupies residues Ser-169–Asn-221. A compositionally biased stretch (polar residues) spans Ser-192–Ala-203.

Belongs to the RuvC family. In terms of assembly, homodimer which binds Holliday junction (HJ) DNA. The HJ becomes 2-fold symmetrical on binding to RuvC with unstacked arms; it has a different conformation from HJ DNA in complex with RuvA. In the full resolvosome a probable DNA-RuvA(4)-RuvB(12)-RuvC(2) complex forms which resolves the HJ. Mg(2+) is required as a cofactor.

It is found in the cytoplasm. The enzyme catalyses Endonucleolytic cleavage at a junction such as a reciprocal single-stranded crossover between two homologous DNA duplexes (Holliday junction).. Its function is as follows. The RuvA-RuvB-RuvC complex processes Holliday junction (HJ) DNA during genetic recombination and DNA repair. Endonuclease that resolves HJ intermediates. Cleaves cruciform DNA by making single-stranded nicks across the HJ at symmetrical positions within the homologous arms, yielding a 5'-phosphate and a 3'-hydroxyl group; requires a central core of homology in the junction. The consensus cleavage sequence is 5'-(A/T)TT(C/G)-3'. Cleavage occurs on the 3'-side of the TT dinucleotide at the point of strand exchange. HJ branch migration catalyzed by RuvA-RuvB allows RuvC to scan DNA until it finds its consensus sequence, where it cleaves and resolves the cruciform DNA. The chain is Crossover junction endodeoxyribonuclease RuvC from Corynebacterium glutamicum (strain ATCC 13032 / DSM 20300 / JCM 1318 / BCRC 11384 / CCUG 27702 / LMG 3730 / NBRC 12168 / NCIMB 10025 / NRRL B-2784 / 534).